The primary structure comprises 675 residues: NADH-ubiquinone oxidoreductase chain 5 (675 aa).

The next 19 membrane-spanning stretches (helical) occupy residues 3 to 23, 27 to 47, 75 to 95, 108 to 127, 132 to 154, 177 to 197, 211 to 231, 251 to 271, 284 to 304, 311 to 329, 334 to 354, 380 to 400, 413 to 433, 462 to 482, 519 to 539, 564 to 584, 593 to 613, 624 to 644, and 649 to 669; these read LLPL…GKFL, VLFV…WIFY, FLFD…SLLV, HIIR…LMLV, FVQL…NFWY, IYFS…GVVF, FLGF…LGAI, TPVS…FVLI, LFLV…VGLV, VIAY…ACGM, VGLF…LGAG, YVAI…TGFY, FSIN…ITSF, SFIF…GFIF, LIPL…YFVI, YFDL…FYLL, LIEL…SIIF, YIFV…SLFF, and SFFN…LSFG.

This sequence belongs to the complex I subunit 5 family.

Its subcellular location is the mitochondrion inner membrane. It catalyses the reaction a ubiquinone + NADH + 5 H(+)(in) = a ubiquinol + NAD(+) + 4 H(+)(out). Functionally, core subunit of the mitochondrial membrane respiratory chain NADH dehydrogenase (Complex I) that is believed to belong to the minimal assembly required for catalysis. Complex I functions in the transfer of electrons from NADH to the respiratory chain. The immediate electron acceptor for the enzyme is believed to be ubiquinone. This is NADH-ubiquinone oxidoreductase chain 5 (ND5) from Acanthamoeba castellanii (Amoeba).